Here is a 1620-residue protein sequence, read N- to C-terminus: ALK tyrosine kinase receptor (1620 aa).

A signal peptide spans 1–18; that stretch reads MGAIGLLWLLPLLLSTAA. At 19–1038 the chain is on the extracellular side; sequence VGSGMGTGQR…PHLPLSLILS (1020 aa). The segment at 48–70 is heparin-binding region; sequence RLQRKSLAVDFVVPSLFRVYARD. N-linked (GlcNAc...) asparagine glycans are attached at residues Asn169, Asn244, Asn285, Asn324, Asn411, Asn424, Asn445, Asn563, Asn571, and Asn627. The region spanning 264 to 427 is the MAM 1 domain; it reads LECSFDFPCE…DFFALKNCSE (164 aa). Residues 437-473 enclose the LDL-receptor class A domain; the sequence is LQSSFTCWNGTVLQLGQACDFHQDCAQGEDESQMCRK. The MAM 2 domain maps to 478 to 636; it reads FYCNFEDGFC…NISISLDCYL (159 aa). Residues 650–674 form a disordered region; the sequence is PKSRNLFERNPNKELKPGENSPRQT. The span at 654–666 shows a compositional bias: basic and acidic residues; that stretch reads NLFERNPNKELKP. A disulfide bridge links Cys688 with Cys701. Residue Asn709 is glycosylated (N-linked (GlcNAc...) asparagine). Cys783 and Cys794 are disulfide-bonded. N-linked (GlcNAc...) asparagine glycans are attached at residues Asn808, Asn863, Asn864, and Asn886. A disulfide bridge links Cys906 with Cys928. Asn986 carries N-linked (GlcNAc...) asparagine glycosylation. Cystine bridges form between Cys987-Cys995, Cys990-Cys1006, and Cys1008-Cys1021. The interval 987-1025 is EGF-like; that stretch reads CSHCEVDECHMDPESHKVICFCDHGTVLAEDGVSCIVSP. Residues 1039–1059 traverse the membrane as a helical segment; the sequence is VVTSALVAALVLAFSGIMIVY. Over 1060–1620 the chain is Cytoplasmic; sequence RRKHQELQAM…SKNSMNQPGP (561 aa). Phosphotyrosine occurs at positions 1078, 1092, and 1096. The 277-residue stretch at 1116–1392 folds into the Protein kinase domain; it reads ITLIRGLGHG…IEYCTQDPDV (277 aa). Residue His1124 participates in ATP binding. At Tyr1131 the chain carries Phosphotyrosine. Residues Lys1150 and 1197 to 1199 contribute to the ATP site; that span reads ELM. The Proton acceptor role is filled by Asp1249. Residue Asp1270 participates in ATP binding. Tyr1278 is subject to Phosphotyrosine. Residues 1408–1463 form a disordered region; that stretch reads EEKVPVRPKDPEGVPPLLVSQQAKREEERSPAAPPPLPTTSSGKAAKKPTAAEISV. The span at 1410-1419 shows a compositional bias: basic and acidic residues; it reads KVPVRPKDPE. Tyr1507 carries the phosphotyrosine modification. The interval 1514-1540 is disordered; it reads KPTKKNNPIAKKEPHDRGNLGLEGSCT. Tyr1604 carries the post-translational modification Phosphotyrosine.

The protein belongs to the protein kinase superfamily. Tyr protein kinase family. Insulin receptor subfamily. Homodimer; homodimerizes following heparin- and ligand-binding. Interacts with CBL, IRS1, PIK3R1 and PLCG1. Interacts with FRS2 and SHC1. Interacts with PTN and MDK. In terms of processing, phosphorylated at tyrosine residues by autocatalysis, which activates kinase activity. In cells not stimulated by a ligand, receptor protein tyrosine phosphatase beta and zeta complex (PTPRB/PTPRZ1) dephosphorylates ALK at the sites in ALK that are undergoing autophosphorylation through autoactivation. Phosphorylation at Tyr-1507 is critical for SHC1 association. Post-translationally, N-glycosylated. As to expression, expressed in brain and CNS. Also expressed in the small intestine and testis, but not in normal lymphoid cells.

It localises to the cell membrane. The catalysed reaction is L-tyrosyl-[protein] + ATP = O-phospho-L-tyrosyl-[protein] + ADP + H(+). Activated upon ALKAL2 ligand-binding. ALKAL2-driven activation is coupled with heparin-binding. Following ligand-binding, homodimerizes and autophosphorylates, activating its kinase activity. Inactivated through dephosphorylation by receptor protein tyrosine phosphatase beta and zeta complex (PTPRB/PTPRZ1) when there is no stimulation by a ligand. Staurosporine, crizotinib and CH5424802 act as inhibitors of ALK kinase activity. Neuronal receptor tyrosine kinase that is essentially and transiently expressed in specific regions of the central and peripheral nervous systems and plays an important role in the genesis and differentiation of the nervous system. Also acts as a key thinness protein involved in the resistance to weight gain: in hypothalamic neurons, controls energy expenditure acting as a negative regulator of white adipose tissue lipolysis and sympathetic tone to fine-tune energy homeostasis. Following activation by ALKAL2 ligand at the cell surface, transduces an extracellular signal into an intracellular response. In contrast, ALKAL1 is not a potent physiological ligand for ALK. Ligand-binding to the extracellular domain induces tyrosine kinase activation, leading to activation of the mitogen-activated protein kinase (MAPK) pathway. Phosphorylates almost exclusively at the first tyrosine of the Y-x-x-x-Y-Y motif. Induces tyrosine phosphorylation of CBL, FRS2, IRS1 and SHC1, as well as of the MAP kinases MAPK1/ERK2 and MAPK3/ERK1. ALK activation may also be regulated by pleiotrophin (PTN) and midkine (MDK). PTN-binding induces MAPK pathway activation, which is important for the anti-apoptotic signaling of PTN and regulation of cell proliferation. MDK-binding induces phosphorylation of the ALK target insulin receptor substrate (IRS1), activates mitogen-activated protein kinases (MAPKs) and PI3-kinase, resulting also in cell proliferation induction. Drives NF-kappa-B activation, probably through IRS1 and the activation of the AKT serine/threonine kinase. Recruitment of IRS1 to activated ALK and the activation of NF-kappa-B are essential for the autocrine growth and survival signaling of MDK. The protein is ALK tyrosine kinase receptor of Homo sapiens (Human).